We begin with the raw amino-acid sequence, 343 residues long: Peptide methionine sulfoxide reductase msrA/msrB (343 aa).

The interval 21–174 is peptide methionine sulfoxide reductase A; it reads KVIYLAGGCF…PNGYCHIDLK (154 aa). Catalysis depends on Cys-29, which acts as the Cysteine sulfenic acid (-SOH) intermediate. Positions 191-314 constitute a MsrB domain; sequence DEVLKKKLTQ…NSASLRFIPL (124 aa). Cys-303 functions as the Nucleophile in the catalytic mechanism.

The protein in the N-terminal section; belongs to the MsrA Met sulfoxide reductase family. It in the C-terminal section; belongs to the MsrB Met sulfoxide reductase family.

The catalysed reaction is L-methionyl-[protein] + [thioredoxin]-disulfide + H2O = L-methionyl-(S)-S-oxide-[protein] + [thioredoxin]-dithiol. It carries out the reaction [thioredoxin]-disulfide + L-methionine + H2O = L-methionine (S)-S-oxide + [thioredoxin]-dithiol. It catalyses the reaction L-methionyl-[protein] + [thioredoxin]-disulfide + H2O = L-methionyl-(R)-S-oxide-[protein] + [thioredoxin]-dithiol. In terms of biological role, has an important function as a repair enzyme for proteins that have been inactivated by oxidation. Catalyzes the reversible oxidation-reduction of methionine sulfoxide in proteins to methionine. The sequence is that of Peptide methionine sulfoxide reductase msrA/msrB from Enterococcus faecalis (Streptococcus faecalis).